A 241-amino-acid chain; its full sequence is Tumor necrosis factor receptor superfamily member grnd (241 aa).

The first 27 residues, 1 to 27, serve as a signal peptide directing secretion; sequence MSVRKLSALSLSIGGVPLIPSVSLVAA. Residues 28-98 are Extracellular-facing; the sequence is ANGESRDCHG…EMLDIQNTQQ (71 aa). 4 cysteine pairs are disulfide-bonded: C35–C47, C40–C54, C57–C77, and C61–C73. N63 carries N-linked (GlcNAc...) asparagine glycosylation. Residues 99–119 traverse the membrane as a helical segment; sequence LILLLLTILLVLIALRCAFQF. The Cytoplasmic portion of the chain corresponds to 120–241; that stretch reads LRWLIGNRCF…PSAATIPVAF (122 aa).

As to quaternary structure, interacts (via extracellular cysteine-rich domain) with egr (via secreted TNF-homology soluble form); forms heterohexamers when 3 copies associate with egr trimers. Interacts with Traf6/TRAF2 and veli (via PDZ domain). In terms of processing, N-glycosylated on Asn-63. Glycosylation regulates ligand binding, specifically reducing affinity for the TNF egr, thereby inhibiting activation of JNK signaling. As to expression, expressed in the adult midgut; under normal conditions expressed at lower levels than the other TNF receptor wgn.

It localises to the apical cell membrane. It is found in the cytoplasmic vesicle membrane. Functionally, acts as a receptor for TNF-cytokine egr. Plays a role in activation of JNK signaling and is required for egr-induced apoptosis, including in wing imaginal discs during development. May also play an egr-independent role in cell proliferation. TNF receptor involved in triggering JNK-dependent proliferation of the enteroblast-enterocyte lineage in response to stress-induced release of egr by intestinal stem cells and enteroblasts. Involved in regulation of insulin production in response to dietary protein shortage keeping systemic growth in check. Activation in brain insulin producing cells through binding of egr released into the hemolymph in response to dietary amino acid shortage, results in JNK-dependent inhibition of insulin production. The protein is Tumor necrosis factor receptor superfamily member grnd of Drosophila melanogaster (Fruit fly).